The following is a 61-amino-acid chain: MAKLSKIAQAKRKPKFSVRQYNRCPLCGRPRAFLRKFKMCRICLRNRALRGEVTGVTKSSW.

Zn(2+) contacts are provided by C24, C27, C40, and C43.

This sequence belongs to the universal ribosomal protein uS14 family. Zinc-binding uS14 subfamily. Part of the 30S ribosomal subunit. Contacts proteins S3 and S10. Zn(2+) is required as a cofactor.

Its function is as follows. Binds 16S rRNA, required for the assembly of 30S particles and may also be responsible for determining the conformation of the 16S rRNA at the A site. In Myxococcus xanthus (strain DK1622), this protein is Small ribosomal subunit protein uS14B.